The primary structure comprises 466 residues: Small RNA degrading nuclease 2 (466 aa).

An Exonuclease domain is found at 142–298 (MIAIDCEMVL…HDAEAAMKLV (157 aa)). The interval 426–466 (EENNASSKKRKRENHSKGTRDRRRCKPLSRRKQRSNVKRRR) is disordered. Residues 445–466 (RDRRRCKPLSRRKQRSNVKRRR) are compositionally biased toward basic residues.

Belongs to the REXO1/REXO3 family.

It localises to the nucleus. 3'-5' exonuclease degrading single-stranded small RNAs. The protein is Small RNA degrading nuclease 2 (SDN2) of Arabidopsis thaliana (Mouse-ear cress).